We begin with the raw amino-acid sequence, 161 residues long: Nucleoside diphosphate kinase (161 aa).

Lys13, Phe61, Arg89, Thr95, Arg106, and Asn116 together coordinate ATP. Residue His119 is the Pros-phosphohistidine intermediate of the active site.

This sequence belongs to the NDK family. The cofactor is Mg(2+).

It localises to the cytoplasm. It carries out the reaction a 2'-deoxyribonucleoside 5'-diphosphate + ATP = a 2'-deoxyribonucleoside 5'-triphosphate + ADP. The catalysed reaction is a ribonucleoside 5'-diphosphate + ATP = a ribonucleoside 5'-triphosphate + ADP. Functionally, major role in the synthesis of nucleoside triphosphates other than ATP. The ATP gamma phosphate is transferred to the NDP beta phosphate via a ping-pong mechanism, using a phosphorylated active-site intermediate. In Halobacterium salinarum (strain ATCC 29341 / DSM 671 / R1), this protein is Nucleoside diphosphate kinase.